A 779-amino-acid polypeptide reads, in one-letter code: Endonuclease MutS2 (779 aa).

An ATP-binding site is contributed by 328-335; that stretch reads GPNTGGKT. The 76-residue stretch at 704 to 779 folds into the Smr domain; the sequence is LDLRGKRYEE…GSGATIVTLG (76 aa).

Belongs to the DNA mismatch repair MutS family. MutS2 subfamily. In terms of assembly, homodimer. Binds to stalled ribosomes, contacting rRNA.

Its function is as follows. Endonuclease that is involved in the suppression of homologous recombination and thus may have a key role in the control of bacterial genetic diversity. Functionally, acts as a ribosome collision sensor, splitting the ribosome into its 2 subunits. Detects stalled/collided 70S ribosomes which it binds and splits by an ATP-hydrolysis driven conformational change. Acts upstream of the ribosome quality control system (RQC), a ribosome-associated complex that mediates the extraction of incompletely synthesized nascent chains from stalled ribosomes and their subsequent degradation. Probably generates substrates for RQC. This chain is Endonuclease MutS2, found in Streptococcus agalactiae serotype III (strain NEM316).